A 338-amino-acid chain; its full sequence is MPGDASMIVIGAGSYGTALAITLARNGHEVLLWGHDPAHIQALEAVRCNQAFLPDVPFPPTLRLEASLPTALAASRDVLIVVPSHVFGSVLTELKPHLRQDARIVWATKGLEAETGRLLQEVAREVLGDQIPLAVLSGPTFARELAAGLPTAIALAATDATFSADLQRLLHCGKSFRVYSNPDLIGVQLGGAVKNVIAIGAGISDGIGFGANARTALITRGLAEMSRLGAAMGAEPGTFMGMAGLGDLVLTCTDNQSRNRRFGLLLGQGVGFEAVQETIGQVVEGYRNTKEVLALAGRYGVEMPITEQIYQVLYQNKNAHQAALTLLGRAQKDERAGG.

The NADPH site is built by Ser14, Tyr15, His35, and Lys109. Positions 109, 138, and 140 each coordinate sn-glycerol 3-phosphate. An NADPH-binding site is contributed by Ala142. Residues Lys194, Asp247, Ser257, Arg258, and Asn259 each coordinate sn-glycerol 3-phosphate. The active-site Proton acceptor is the Lys194. Arg258 lines the NADPH pocket. Residues Val282 and Glu284 each coordinate NADPH.

Belongs to the NAD-dependent glycerol-3-phosphate dehydrogenase family.

It localises to the cytoplasm. It catalyses the reaction sn-glycerol 3-phosphate + NAD(+) = dihydroxyacetone phosphate + NADH + H(+). It carries out the reaction sn-glycerol 3-phosphate + NADP(+) = dihydroxyacetone phosphate + NADPH + H(+). Its pathway is membrane lipid metabolism; glycerophospholipid metabolism. Catalyzes the reduction of the glycolytic intermediate dihydroxyacetone phosphate (DHAP) to sn-glycerol 3-phosphate (G3P), the key precursor for phospholipid synthesis. The sequence is that of Glycerol-3-phosphate dehydrogenase [NAD(P)+] from Sodalis glossinidius (strain morsitans).